Here is a 214-residue protein sequence, read N- to C-terminus: uncharacterized protein (214 aa).

Residues 1 to 49 (MATRGAVAAAASTIWKHRRNPSLRSLSRHFNPNFNHRIIPTGFKYQVRA) constitute a chloroplast transit peptide.

It is found in the plastid. It localises to the chloroplast. This is an uncharacterized protein from Arabidopsis thaliana (Mouse-ear cress).